Reading from the N-terminus, the 422-residue chain is CinA-like protein (422 aa).

It belongs to the CinA family.

In Mycolicibacterium vanbaalenii (strain DSM 7251 / JCM 13017 / BCRC 16820 / KCTC 9966 / NRRL B-24157 / PYR-1) (Mycobacterium vanbaalenii), this protein is CinA-like protein.